Here is a 106-residue protein sequence, read N- to C-terminus: Large ribosomal subunit protein eL42 (106 aa).

Basic residues predominate over residues 1–29; it reads MVNIPKTRRTYCKGKACRKHTPHKVTQYK. Residues 1-56 form a disordered region; it reads MVNIPKTRRTYCKGKACRKHTPHKVTQYKKGKDSLSAQGKRRYDRKQSGYGGQTKP.

Belongs to the eukaryotic ribosomal protein eL42 family.

The protein is Large ribosomal subunit protein eL42 (RPL44) of Cryptococcus neoformans var. neoformans serotype D (strain B-3501A) (Filobasidiella neoformans).